Reading from the N-terminus, the 378-residue chain is Response regulator aspartate phosphatase A (378 aa).

TPR repeat units lie at residues 101-137 (YYFN…VSDD), 148-181 (AEIF…TVRR), 183-215 (QCEF…AKKE), 222-255 (SSAL…CKSE), 261-294 (PHSI…ARQY), and 336-369 (EELA…QKQI).

This sequence belongs to the Rap family. Homodimer. Interacts with its substrate, phosphorylated Spo0F, and its inhibitor, the PhrA pentapeptide. The RapA dimer forms a stable complex with two molecules of phosphorylated Spo0F. The complex is dissociated after dephosphorylation of Spo0F by RapA. The cofactor is Mn(2+).

It localises to the cytoplasm. Phosphatase activity is inhibited by the phosphatase regulator PhrA. Interaction with PhrA dissociates the RapA-Spo0F complex. Activity is abolished in the presence of EDTA. Functionally, involved in the regulation of sporulation. Acts as a phosphatase that specifically dephosphorylates the sporulation initiation phosphotransferase Spo0F and inhibits its activity. The chain is Response regulator aspartate phosphatase A from Bacillus subtilis (strain 168).